The sequence spans 468 residues: ATP synthase subunit beta (468 aa).

155-162 is an ATP binding site; it reads GGAGVGKT.

Belongs to the ATPase alpha/beta chains family. As to quaternary structure, F-type ATPases have 2 components, CF(1) - the catalytic core - and CF(0) - the membrane proton channel. CF(1) has five subunits: alpha(3), beta(3), gamma(1), delta(1), epsilon(1). CF(0) has three main subunits: a(1), b(2) and c(9-12). The alpha and beta chains form an alternating ring which encloses part of the gamma chain. CF(1) is attached to CF(0) by a central stalk formed by the gamma and epsilon chains, while a peripheral stalk is formed by the delta and b chains.

It is found in the cell inner membrane. The enzyme catalyses ATP + H2O + 4 H(+)(in) = ADP + phosphate + 5 H(+)(out). Functionally, produces ATP from ADP in the presence of a proton gradient across the membrane. The catalytic sites are hosted primarily by the beta subunits. In Thermotoga petrophila (strain ATCC BAA-488 / DSM 13995 / JCM 10881 / RKU-1), this protein is ATP synthase subunit beta.